Here is a 997-residue protein sequence, read N- to C-terminus: Mannuronan C5-epimerase AlgE2 (997 aa).

PbH1 repeat units lie at residues 133-155 (DRDV…DPHE), 157-179 (TINL…VADF), 180-202 (QIGG…NIVT), 204-226 (TNDF…VVQR), 257-279 (AHDV…RVYG), 280-315 (AEDV…GVSG), and 320-359 (TTGT…SVSN). Hemolysin-type calcium-binding repeat units follow at residues 388 to 403 (GTAG…AHET), 406 to 422 (GLDG…NDIL), 424 to 439 (GGAG…GADL), 557 to 573 (GHAG…DDIL), 574 to 591 (VGGA…ADVF), 696 to 711 (GSAG…ADEV), 713 to 730 (HGGG…ADVF), 828 to 839 (GGDGNDTLSGSS), 846 to 862 (GGVG…NDIL), and 864 to 880 (GGAG…SDIF).

Belongs to the D-mannuronate C5-epimerase family. Requires Ca(2+) as cofactor.

It is found in the secreted. The catalysed reaction is [(1-&gt;4)-beta-D-mannuronosyl](n) = [alginate](n). Its pathway is glycan biosynthesis; alginate biosynthesis. Inhibited by zinc. In terms of biological role, converts beta-D-mannuronic acid (M) to alpha-L-guluronic acid (G), producing a polymer with gel-forming capacity, required for the formation of the cyst coat. The chain is Mannuronan C5-epimerase AlgE2 from Azotobacter vinelandii.